The following is a 434-amino-acid chain: Xylose isomerase (434 aa).

Catalysis depends on residues His-100 and Asp-103. Glu-231, Glu-267, His-270, Asp-295, Asp-306, Asp-308, and Asp-338 together coordinate Mg(2+).

This sequence belongs to the xylose isomerase family. In terms of assembly, homotetramer. Mg(2+) is required as a cofactor.

The protein localises to the cytoplasm. It carries out the reaction alpha-D-xylose = alpha-D-xylulofuranose. The polypeptide is Xylose isomerase (Ruegeria pomeroyi (strain ATCC 700808 / DSM 15171 / DSS-3) (Silicibacter pomeroyi)).